A 310-amino-acid chain; its full sequence is Upstream stimulatory factor 1 (310 aa).

The span at 1–17 (MKGQQKTAETEEGTVQI) shows a compositional bias: polar residues. 2 disordered regions span residues 1–26 (MKGQ…ATGE) and 171–209 (QGGS…EVER). Positions 190–209 (EAPRTTRDEKRRAQHNEVER) are enriched in basic and acidic residues. Positions 199–254 (KRRAQHNEVERRRRDKINNWIVQLSKIIPDCSMESTKSGQSKGGILSKACDYIQEL) constitute a bHLH domain. Residues 271–292 (LQLDNDVLRQQVEDLKNKNLLL) are leucine-zipper. Lys306 is covalently cross-linked (Glycyl lysine isopeptide (Lys-Gly) (interchain with G-Cter in SUMO2)).

As to quaternary structure, efficient DNA binding requires dimerization with another bHLH protein. Binds DNA as a homodimer or a heterodimer (USF1/USF2).

It localises to the nucleus. Functionally, transcription factor that binds to a symmetrical DNA sequence (E-boxes) (5'-CACGTG-3') that is found in a variety of viral and cellular promoters. This Mus musculus (Mouse) protein is Upstream stimulatory factor 1 (Usf1).